Reading from the N-terminus, the 999-residue chain is MEEAHLLSAADVLRRFSVTAEGGLSLEQVTDARERYGPNELPTEEGKSLWELVVEQFEDLLVRILLLAALVSFVLAWFEEGEETTTAFVEPLVIMLILVANAIVGVWQERNAESAIEALKEYEPEMGKVIRSDRKGVQRIRARDIVPGDIVEVAVGDKVPADLRLIEIKSTTLRVDQSILTGESVSVTKHTDAIPDPRAVNQDKKNMLFSGTNIASGKALGVAVATGLQTELGKIRSQMAAVEPERTPLQRKLDEFGRQLSHAISVICVAVWVINIGHFADPAHGGSWLRGAVYYFKIAVALAVAAIPEGLPAVITTCLALGTRRMARKNAIVRSLPSVETLGCTSVICSDKTGTLTTNQMSVCRMFVVAEAEAGTCRLHEFTISGTTYTPEGEVRQGEQPVRCGQFDGLVELATICALCNDSALDYNEAKGVYEKVGEATETALTCLVEKMNVFDTDLKGLSRVERAGACNSVIKQLMRKEFTLEFSRDRKSMSVYCTPTRADPKVQGSKMFVKGAPESVIERCSSVRVGSRTAPLSTTSREHILAKIRDWGSGSDTLRCLALATRDTPPRKEDMHLDDCSRFVQYETDLTFVGCVGMLDPPRPEVAACITRCSRAGIRVVMITGDNKGTAVAICRRLGIFGDTEDVLGKAYTGREFDDLSPEQQRQACRTARCFARVEPAHKSRIVENLQSFNEITAMTGDGVNDAPALKKAEIGIAMGSGTAVAKSAAEMVLSDDNFASIVAAVEEGRAIYNNMKQFIRYLISSNVGEVVCIFLTAILGLPEALIPVQLLWVNLVTDGLPATALGFNPPDLDIMEKPPRNPREALISGWLFFRYLAIGVYVGLATVAAATWWFLYDTEGPQVTFYQLRNFLKCSEDNPLFAGIDCKVFESRFPTTMALSVLVTIEMCNALNSVSENQSLLRMPPWLNPWLLGAVVMSMALHFLILLVPPLPLIFQVTPLSGRQWGVVLQMSLPVILLDEALKYLSRNHMDEKKDLK.

The residue at position 1 (Met-1) is an N-acetylmethionine. Over 1 to 48 (MEEAHLLSAADVLRRFSVTAEGGLSLEQVTDARERYGPNELPTEEGKS) the chain is Cytoplasmic. Ser-17 bears the Phosphoserine mark. Phosphothreonine is present on Thr-19. The residue at position 25 (Ser-25) is a Phosphoserine. A helical transmembrane segment spans residues 49–69 (LWELVVEQFEDLLVRILLLAA). Residues 70–89 (LVSFVLAWFEEGEETTTAFV) are Lumenal-facing. Residues 90–110 (EPLVIMLILVANAIVGVWQER) form a helical membrane-spanning segment. Residues 111–253 (NAESAIEALK…PERTPLQRKL (143 aa)) lie on the Cytoplasmic side of the membrane. Residues 254–273 (DEFGRQLSHAISVICVAVWV) form a helical membrane-spanning segment. Topologically, residues 274-295 (INIGHFADPAHGGSWLRGAVYY) are lumenal. A helical membrane pass occupies residues 296–313 (FKIAVALAVAAIPEGLPA). Residues Val-304, Ala-305, Ile-307, and Glu-309 each coordinate Ca(2+). The Cytoplasmic segment spans residues 314 to 757 (VITTCLALGT…EEGRAIYNNM (444 aa)). Asp-351 (4-aspartylphosphate intermediate) is an active-site residue. Asp-351 and Thr-353 together coordinate Mg(2+). Thr-353 serves as a coordination point for ATP. An interaction with phospholamban 1 region spans residues 370–400 (AEAEAGTCRLHEFTISGTTYTPEGEVRQGEQ). Thr-415 carries the post-translational modification Phosphothreonine. ATP is bound by residues Glu-442, Arg-489, Lys-515, Arg-560, Thr-625, Gly-626, and Asp-627. Phosphoserine is present on Ser-662. Residues Arg-678 and Lys-684 each contribute to the ATP site. Asp-703 contacts Mg(2+). Asn-706 is a binding site for ATP. Residues 758-777 (KQFIRYLISSNVGEVVCIFL) form a helical membrane-spanning segment. Ca(2+)-binding residues include Asn-768 and Glu-771. At 778–787 (TAILGLPEAL) the chain is on the lumenal side. A helical transmembrane segment spans residues 788-808 (IPVQLLWVNLVTDGLPATALG). The interaction with phospholamban 2 stretch occupies residues 788–808 (IPVQLLWVNLVTDGLPATALG). Ca(2+) is bound by residues Asn-796, Thr-799, and Asp-800. Topologically, residues 809–828 (FNPPDLDIMEKPPRNPREAL) are cytoplasmic. A helical membrane pass occupies residues 829-851 (ISGWLFFRYLAIGVYVGLATVAA). The Lumenal portion of the chain corresponds to 852–897 (ATWWFLYDTEGPQVTFYQLRNFLKCSEDNPLFAGIDCKVFESRFPT). Residues 898 to 917 (TMALSVLVTIEMCNALNSVS) form a helical membrane-spanning segment. A Ca(2+)-binding site is contributed by Glu-908. Topologically, residues 918 to 930 (ENQSLLRMPPWLN) are cytoplasmic. The helical transmembrane segment at 931 to 949 (PWLLGAVVMSMALHFLILL) threads the bilayer. Over 950–964 (VPPLPLIFQVTPLSG) the chain is Lumenal. A helical transmembrane segment spans residues 965–985 (RQWGVVLQMSLPVILLDEALK). Residues 986-999 (YLSRNHMDEKKDLK) are Cytoplasmic-facing.

The protein belongs to the cation transport ATPase (P-type) (TC 3.A.3) family. Type IIA subfamily. In terms of assembly, interacts with sarcolipin (SLN). Interacts with phospholamban (PLN). Interacts with myoregulin (MRLN). Interacts with DWORF. Interacts with VMP1. Interacts with TUNAR; the interaction occurs at low levels in low glucose conditions and is increased by high glucose levels. Mg(2+) serves as cofactor.

Its subcellular location is the endoplasmic reticulum membrane. It is found in the sarcoplasmic reticulum membrane. The catalysed reaction is Ca(2+)(in) + ATP + H2O = Ca(2+)(out) + ADP + phosphate + H(+). Its activity is regulated as follows. Inhibited by sarcolipin (SLN), phospholamban (PLN) and myoregulin (MRLN). Enhanced by DWORF; DWORF increases activity by displacing sarcolipin (SLN), phospholamban (PLN) and myoregulin (MRLN). Its function is as follows. This magnesium-dependent enzyme catalyzes the hydrolysis of ATP coupled with the transport of calcium. Transports calcium ions from the cytosol into the sarcoplasmic/endoplasmic reticulum lumen. Contributes to calcium sequestration involved in muscular excitation/contraction. The polypeptide is Sarcoplasmic/endoplasmic reticulum calcium ATPase 3 (Atp2a3) (Mus musculus (Mouse)).